The following is a 479-amino-acid chain: MMDVNSSGRPDLYGHLRSFLLPEVGRGLPDLSPDGGADPVAGSWAPHLLSEVTASPAPTWDAPPDNASGCGEQINYGRVEKVVIGSILTLITLLTIAGNCLVVISVCFVKKLRQPSNYLIVSLALADLSVAVAVMPFVSVTDLIGGKWIFGHFFCNVFIAMDVMCCTASIMTLCVISIDRYLGITRPLTYPVRQNGKCMAKMILSVWLLSASITLPPLFGWAQNVNDDKVCLISQDFGYTIYSTAVAFYIPMSVMLFMYYQIYKAARKSAAKHKFPGFPRVEPDSVIALNGIVKLQKEVEECANLSRLLKHERKNISIFKREQKAATTLGIIVGAFTVCWLPFFLLSTARPFICGTSCSCIPLWVERTFLWLGYANSLINPFIYAFFNRDLRTTYRSLLQCQYRNINRKLSAAGMHEALKLAERPERPEFVLRACTRRVLLRPEKRPPVSVWVLQSPDHHNWLADKMLTTVEKKVMIHD.

Over 1-83 the chain is Extracellular; it reads MMDVNSSGRP…INYGRVEKVV (83 aa). N-linked (GlcNAc...) asparagine glycosylation is found at asparagine 5 and asparagine 66. The helical transmembrane segment at 84–108 threads the bilayer; sequence IGSILTLITLLTIAGNCLVVISVCF. Over 109 to 118 the chain is Cytoplasmic; it reads VKKLRQPSNY. A helical transmembrane segment spans residues 119–140; sequence LIVSLALADLSVAVAVMPFVSV. Residues 141 to 152 lie on the Extracellular side of the membrane; it reads TDLIGGKWIFGH. Residues 153–178 form a helical membrane-spanning segment; the sequence is FFCNVFIAMDVMCCTASIMTLCVISI. A disulfide bridge connects residues cysteine 155 and cysteine 231. Aspartate 162 serves as a coordination point for serotonin. Over 179–198 the chain is Cytoplasmic; it reads DRYLGITRPLTYPVRQNGKC. The chain crosses the membrane as a helical span at residues 199-219; sequence MAKMILSVWLLSASITLPPLF. Residues 220-237 lie on the Extracellular side of the membrane; sequence GWAQNVNDDKVCLISQDF. The chain crosses the membrane as a helical span at residues 238 to 260; the sequence is GYTIYSTAVAFYIPMSVMLFMYY. The Cytoplasmic segment spans residues 261–326; the sequence is QIYKAARKSA…SIFKREQKAA (66 aa). Residues 327–352 form a helical membrane-spanning segment; it reads TTLGIIVGAFTVCWLPFFLLSTARPF. At 353 to 363 the chain is on the extracellular side; it reads ICGTSCSCIPL. Residues 364 to 387 traverse the membrane as a helical segment; sequence WVERTFLWLGYANSLINPFIYAFF. The Cytoplasmic portion of the chain corresponds to 388-479; the sequence is NRDLRTTYRS…TVEKKVMIHD (92 aa). Cysteine 401 is lipidated: S-palmitoyl cysteine.

The protein belongs to the G-protein coupled receptor 1 family. Predominant isoform in spleen, caudate and hippocampus. In terms of tissue distribution, expressed at lower levels. As to expression, minor isoform in terms of expression.

It is found in the cell membrane. Functionally, G-protein coupled receptor for 5-hydroxytryptamine (serotonin), a biogenic hormone that functions as a neurotransmitter, a hormone and a mitogen. Ligand binding causes a conformation change that triggers signaling via guanine nucleotide-binding proteins (G proteins) and modulates the activity of downstream effectors. HTR7 is coupled to G(s) G alpha proteins and mediates activation of adenylate cyclase activity. This Homo sapiens (Human) protein is 5-hydroxytryptamine receptor 7.